Reading from the N-terminus, the 193-residue chain is MANILFLDNFDSFTYNLVDQFRVLGHNVTIYRNDCDLEKLVETALNTPDTILALSPGPGTPSEAGILLPLIERLKNQVPIIGVCLGHQALIQAFGGKVVHAGEVLHGKVSRISHDNEAMFKDLANPMPVARYHSLMGQDLPKEFIVNAEYNGIIMAIRHRDLPICAFQFHPESILTVQGSQLLQQSIEWLLNR.

Positions 3–193 (NILFLDNFDS…QQSIEWLLNR (191 aa)) constitute a Glutamine amidotransferase type-1 domain. 57 to 59 (GPG) serves as a coordination point for L-glutamine. Catalysis depends on Cys84, which acts as the Nucleophile; for GATase activity. Residues Gln88 and 134-135 (SL) contribute to the L-glutamine site. Catalysis depends on for GATase activity residues His170 and Glu172.

Heterotetramer consisting of two non-identical subunits: a beta subunit (TrpG) and a large alpha subunit (TrpE).

The catalysed reaction is chorismate + L-glutamine = anthranilate + pyruvate + L-glutamate + H(+). Its pathway is amino-acid biosynthesis; L-tryptophan biosynthesis; L-tryptophan from chorismate: step 1/5. Functionally, part of a heterotetrameric complex that catalyzes the two-step biosynthesis of anthranilate, an intermediate in the biosynthesis of L-tryptophan. In the first step, the glutamine-binding beta subunit (TrpG) of anthranilate synthase (AS) provides the glutamine amidotransferase activity which generates ammonia as a substrate that, along with chorismate, is used in the second step, catalyzed by the large alpha subunit of AS (TrpE) to produce anthranilate. In the absence of TrpG, TrpE can synthesize anthranilate directly from chorismate and high concentrations of ammonia. This chain is Anthranilate synthase component 2 (trpG), found in Haemophilus influenzae (strain ATCC 51907 / DSM 11121 / KW20 / Rd).